The chain runs to 338 residues: Acyl-CoA:acyl-CoA alkyltransferase (338 aa).

Residues His-18 and Asp-56 each coordinate Mn(2+). Catalysis depends on Glu-97, which acts as the Proton acceptor. Cys-123 functions as the Acyl-thioester intermediate in the catalytic mechanism.

This sequence belongs to the thiolase-like superfamily. OleA family. Homodimer. Weakly associates with the OleBCD complex.

It is found in the cytoplasm. It catalyses the reaction a 1,2-saturated acyl-CoA + an acyl-CoA + H2O = an (R)-2-alkyl-3-oxoalkanoate + 2 CoA + H(+). With respect to regulation, inhibited by cerulenin. Its function is as follows. Involved in olefin biosynthesis. Catalyzes a non-decarboxylative head-to-head Claisen condensation of two acyl-CoA molecules, generating an (R)-2-alkyl-3-oxoalkanoate. Is active with fatty acyl-CoA substrates that ranged from C(8) to C(16) in length, and is the most active with palmitoyl-CoA and myristoyl-CoA. The chain is Acyl-CoA:acyl-CoA alkyltransferase from Xanthomonas campestris pv. campestris (strain ATCC 33913 / DSM 3586 / NCPPB 528 / LMG 568 / P 25).